A 198-amino-acid polypeptide reads, in one-letter code: NAD(P)H dehydrogenase (quinone) (198 aa).

A Flavodoxin-like domain is found at 4–189; that stretch reads ILVLYYSMYG…SIARYQGEYV (186 aa). Residues 10–15 and 78–80 each bind FMN; these read SMYGHI and TRF. Y12 is a binding site for NAD(+). A substrate-binding site is contributed by W98. FMN-binding positions include 113–118 and H133; that span reads STGTGG.

Belongs to the WrbA family. Requires FMN as cofactor.

It catalyses the reaction a quinone + NADH + H(+) = a quinol + NAD(+). It carries out the reaction a quinone + NADPH + H(+) = a quinol + NADP(+). The chain is NAD(P)H dehydrogenase (quinone) from Salmonella paratyphi C (strain RKS4594).